Consider the following 498-residue polypeptide: MRKAAVGAAVVCTAAVCAAAAVLVRQRMKSSSKWGRVMAILKELDDNCGTPLGKLRQVADAMTVEMHAGLASEGASKLKMLISYVDNLPTGDEHGLFYALDLGGTNFRVLRVKLGGKEKRVVEQEFDEVSIPPELMVGTSEQLFDYIAEALAKFVATESEGLHPEPNKQRELGFTFSFPVKQTSIASGTLIRWTKGFNIEDTVGEDVVAELTKAMLRKGVDMRVTALVNDTVGTLAGGRYYKEDVIAAVILGTGTNAAYVERASAIHKWHGPLPKSGEMVINMEWGNFRSSYLPLTEYDIALDEESLNPGEQIFEKMISGMYLGEIVRRVLYRMADEASLFGDTVPSKLKTPFILRTPDMSAMHHDTSPDLKVVASKLKDVLGIPNSSLKVRKIIVDVCDVIASRGACISAAGILGIIKKLGRDTLKQGENQKSVIALDGGLFEHYAKFRECMEDSLKELLGDEVAETIVIEHSNDGSGIGAALLAASHSQYLEEDES.

The chain crosses the membrane as a helical span at residues 4-24 (AAVGAAVVCTAAVCAAAAVLV). The 453-residue stretch at 35 to 487 (GRVMAILKEL…SGIGAALLAA (453 aa)) folds into the Hexokinase domain. A hexokinase small subdomain region spans residues 90–228 (TGDEHGLFYA…GVDMRVTALV (139 aa)). Positions 104, 105, and 106 each coordinate ADP. Residues Thr194, Lys195, Asn229, and Asp230 each coordinate D-glucose. Residues 229–476 (NDTVGTLAGG…ETIVIEHSND (248 aa)) are hexokinase large subdomain. ADP is bound at residue Thr253. Positions 256, 284, and 315 each coordinate D-glucose. Gly441 contributes to the ADP binding site.

It belongs to the hexokinase family.

It is found in the plastid. The protein localises to the chloroplast outer membrane. It catalyses the reaction a D-hexose + ATP = a D-hexose 6-phosphate + ADP + H(+). The enzyme catalyses D-fructose + ATP = D-fructose 6-phosphate + ADP + H(+). It carries out the reaction D-glucose + ATP = D-glucose 6-phosphate + ADP + H(+). The protein operates within carbohydrate metabolism; hexose metabolism. It functions in the pathway carbohydrate degradation; glycolysis; D-glyceraldehyde 3-phosphate and glycerone phosphate from D-glucose: step 1/4. Its function is as follows. Fructose and glucose phosphorylating enzyme. The polypeptide is Hexokinase-1 (HXK1) (Spinacia oleracea (Spinach)).